A 198-amino-acid polypeptide reads, in one-letter code: KHSLPDLPYDYGALEPHINAQIMQLHHSKHHAAYVNNLNVTEEKYQEALAKGDVTAQIALQPALKFNGGGHINHSIFWTNLSPNGGGEPKGELLEAIKRDFGSFEKFKEKLTAASVGVQGSGWGWLGFNKERGQLQIAACPNQDPLQGTTGLIPLLGIDVWEHAYYLQYKNVRPDYLKAIWNVINWENVTERYMACKK.

Mn(2+) is bound at residue H26. Residue Y34 is modified to 3'-nitrotyrosine. An N6-acetyllysine; alternate mark is found at K44 and K51. 2 positions are modified to N6-succinyllysine; alternate: K44 and K51. A Mn(2+)-binding site is contributed by H74. Residue K90 is modified to N6-acetyllysine. Residues K98 and K106 each carry the N6-acetyllysine; alternate modification. N6-succinyllysine; alternate occurs at positions 98 and 106. Residues D159 and H163 each contribute to the Mn(2+) site. K178 is modified (N6-acetyllysine).

Belongs to the iron/manganese superoxide dismutase family. Homotetramer. Mn(2+) is required as a cofactor. In terms of processing, nitrated under oxidative stress. Nitration coupled with oxidation inhibits the catalytic activity. Acetylation at Lys-98 decreases enzymatic activity. Deacetylated by SIRT3 upon exposure to ionizing radiations or after long fasting. Post-translationally, polyubiquitinated; leading to proteasomal degradation. Deubiquitinated by USP36 which increases protein stability.

The protein localises to the mitochondrion matrix. It carries out the reaction 2 superoxide + 2 H(+) = H2O2 + O2. In terms of biological role, destroys superoxide anion radicals which are normally produced within the cells and which are toxic to biological systems. The sequence is that of Superoxide dismutase [Mn], mitochondrial (SOD2) from Macaca fuscata fuscata (Japanese macaque).